The following is a 168-amino-acid chain: UPF0262 protein BRADO6636 (168 aa).

The protein belongs to the UPF0262 family.

This chain is UPF0262 protein BRADO6636, found in Bradyrhizobium sp. (strain ORS 278).